A 1024-amino-acid chain; its full sequence is Error-prone DNA polymerase (1024 aa).

This sequence belongs to the DNA polymerase type-C family. DnaE2 subfamily.

It localises to the cytoplasm. The enzyme catalyses DNA(n) + a 2'-deoxyribonucleoside 5'-triphosphate = DNA(n+1) + diphosphate. Functionally, DNA polymerase involved in damage-induced mutagenesis and translesion synthesis (TLS). It is not the major replicative DNA polymerase. The sequence is that of Error-prone DNA polymerase from Vibrio vulnificus (strain YJ016).